We begin with the raw amino-acid sequence, 438 residues long: 23S rRNA (uracil(1939)-C(5))-methyltransferase RlmD (438 aa).

In terms of domain architecture, TRAM spans 10-68 (KTKNVQTITADILDLDYQGLGVAKINGKTWFIENALPHEKVECRILEDKRQYGHAIVKK). Positions 81, 87, 90, and 168 each coordinate [4Fe-4S] cluster. S-adenosyl-L-methionine contacts are provided by Q271, F300, N305, E321, D348, and D369. The Nucleophile role is filled by C395.

This sequence belongs to the class I-like SAM-binding methyltransferase superfamily. RNA M5U methyltransferase family. RlmD subfamily.

It carries out the reaction uridine(1939) in 23S rRNA + S-adenosyl-L-methionine = 5-methyluridine(1939) in 23S rRNA + S-adenosyl-L-homocysteine + H(+). Catalyzes the formation of 5-methyl-uridine at position 1939 (m5U1939) in 23S rRNA. The polypeptide is 23S rRNA (uracil(1939)-C(5))-methyltransferase RlmD (Haemophilus influenzae (strain ATCC 51907 / DSM 11121 / KW20 / Rd)).